A 510-amino-acid polypeptide reads, in one-letter code: NAD(P)H-quinone oxidoreductase subunit 2, chloroplastic (510 aa).

The next 12 helical transmembrane spans lie at 24 to 44 (LLLF…GLIL), 59 to 79 (WFYF…LFRW), 99 to 119 (IFQF…VEYI), 124 to 144 (MAIT…MFLC), 149 to 169 (LITI…LSGY), 183 to 203 (YLLM…WLYG), 229 to 249 (ISIA…PAPF), 295 to 315 (WHLL…LIAI), 323 to 343 (MLAY…IVGD), 354 to 374 (YMLF…LFGL), 395 to 415 (ALSS…AGFF), and 418 to 438 (LYLF…IGLL).

The protein belongs to the complex I subunit 2 family. As to quaternary structure, NDH is composed of at least 16 different subunits, 5 of which are encoded in the nucleus.

It is found in the plastid. It localises to the chloroplast thylakoid membrane. It catalyses the reaction a plastoquinone + NADH + (n+1) H(+)(in) = a plastoquinol + NAD(+) + n H(+)(out). The catalysed reaction is a plastoquinone + NADPH + (n+1) H(+)(in) = a plastoquinol + NADP(+) + n H(+)(out). Functionally, NDH shuttles electrons from NAD(P)H:plastoquinone, via FMN and iron-sulfur (Fe-S) centers, to quinones in the photosynthetic chain and possibly in a chloroplast respiratory chain. The immediate electron acceptor for the enzyme in this species is believed to be plastoquinone. Couples the redox reaction to proton translocation, and thus conserves the redox energy in a proton gradient. The polypeptide is NAD(P)H-quinone oxidoreductase subunit 2, chloroplastic (Ananas comosus (Pineapple)).